The sequence spans 552 residues: Eukaryotic translation initiation factor 3 subunit D (552 aa).

Residues 288 to 302 (DFDLLTVSETANEPP) form an RNA gate region. The disordered stretch occupies residues 526 to 552 (PDGTFSSDEEDDDDDEEEEEEVEEEES). Positions 532-552 (SDEEDDDDDEEEEEEVEEEES) are enriched in acidic residues.

The protein belongs to the eIF-3 subunit D family. Component of the eukaryotic translation initiation factor 3 (eIF-3) complex, which is composed of 13 subunits: eif3a, eif3b, eif3c, eif3d, eif3e, eif3f, eif3g, eif3h, eif3i, eif3j, eif3k, eif3l and eif3m.

The protein resides in the cytoplasm. MRNA cap-binding component of the eukaryotic translation initiation factor 3 (eIF-3) complex, which is involved in protein synthesis of a specialized repertoire of mRNAs and, together with other initiation factors, stimulates binding of mRNA and methionyl-tRNAi to the 40S ribosome. The eIF-3 complex specifically targets and initiates translation of a subset of mRNAs involved in cell proliferation. In the eIF-3 complex, eif3d specifically recognizes and binds the 7-methylguanosine cap of a subset of mRNAs. The chain is Eukaryotic translation initiation factor 3 subunit D (eif3d) from Xenopus tropicalis (Western clawed frog).